Here is a 111-residue protein sequence, read N- to C-terminus: Large ribosomal subunit protein uL24 (111 aa).

It belongs to the universal ribosomal protein uL24 family. Part of the 50S ribosomal subunit.

In terms of biological role, one of two assembly initiator proteins, it binds directly to the 5'-end of the 23S rRNA, where it nucleates assembly of the 50S subunit. One of the proteins that surrounds the polypeptide exit tunnel on the outside of the subunit. The polypeptide is Large ribosomal subunit protein uL24 (Myxococcus xanthus (strain DK1622)).